The primary structure comprises 205 residues: MAGVRAVQKEKTRRALVDAAFNQLSAEKSFSNLSLREVAREAGIAPTSFYRHFSDMDELGLEMVDEAGLMLRQLMRQARKRIDAGGSVISVSVDTFFEFITNSTNVFRLLLRESSGTSQAFRTAAAREIKHFVDELAEYISYKHQYSQYVAYVQAEGIVTIVFTAGANALDMSKAEREQLKARVILQLRMLAKGADFAANKERGK.

Residues 11–71 form the HTH tetR-type domain; sequence KTRRALVDAA…EMVDEAGLML (61 aa).

This is an uncharacterized protein from Haemophilus influenzae (strain ATCC 51907 / DSM 11121 / KW20 / Rd).